A 1135-amino-acid chain; its full sequence is Retinoblastoma-like protein 2 (1135 aa).

Positions 1–43 (MASGGNQSSPPPPAAAASSEEEEEDGDTADRAQPAGSPSHQIQ) are disordered. Ser-410 carries the phosphoserine modification. Position 414 is a phosphothreonine (Thr-414). Positions 414–613 (TPVSTATHSL…DRIRDNENRV (200 aa)) are domain A. Residues 414 to 1021 (TPVSTATHSL…QTFAMKYSQA (608 aa)) form a pocket; binds E1A region. O-linked (GlcNAc) serine glycosylation occurs at Ser-417. Residues 614-824 (PTCEEVTPPH…QGQPLTSSSI (211 aa)) form a spacer region. Ser-636 bears the Phosphoserine mark. Thr-639 carries the phosphothreonine modification. 3 disordered regions span residues 649–698 (DAGG…PPQP), 806–825 (ISPG…SSIR), and 932–995 (RRNS…EEEE). Polar residues predominate over residues 656–674 (SVTSPTTLYDRYSSPTVST). A phosphoserine mark is found at Ser-659, Ser-669, and Ser-684. Residues 806–818 (ISPGGQQQNQGQP) show a composition bias toward low complexity. The segment at 825–1021 (RPRKTSSLSL…QTFAMKYSQA (197 aa)) is domain B. 2 stretches are compositionally biased toward polar residues: residues 935-950 (SGSC…PTEL) and 958-969 (DSSPVMRSNSTL). Phosphoserine occurs at positions 942, 946, 960, 965, and 967. Thr-968 is subject to Phosphothreonine. The segment covering 971 to 981 (VPQPSSAPPTP) has biased composition (pro residues). Phosphoserine is present on residues Ser-975 and Ser-976. Phosphothreonine is present on Thr-980. Phosphoserine occurs at positions 1031, 1064, 1076, and 1108.

The protein belongs to the retinoblastoma protein (RB) family. As to quaternary structure, interacts with AATF, KMT5B and KMT5C. Component of the DREAM complex (also named LINC complex) at least composed of E2F4, E2F5, LIN9, LIN37, LIN52, LIN54, MYBL1, MYBL2, RBL1, RBL2, RBBP4, TFDP1 and TFDP2. The complex exists in quiescent cells where it represses cell cycle-dependent genes. It dissociates in S phase when LIN9, LIN37, LIN52 and LIN54 form a subcomplex that binds to MYBL2. Interacts with USP4. Part of the peroxisome proliferator activated receptor alpha (PPAR-alpha) interacting complex (PRIC). Interacts with RINT1. Interacts with PML. Interacts with RBBP9. Interacts with CD53. In terms of processing, during G0 and early G1 phase of the cell cycle, phosphorylated on Ser-636 and on 5 sites within the domain B. Phosphorylation on Ser-669 in G1 leads to its ubiquitin-dependent proteolysis.

It is found in the nucleus. Key regulator of entry into cell division. Directly involved in heterochromatin formation by maintaining overall chromatin structure and, in particular, that of constitutive heterochromatin by stabilizing histone methylation. Recruits and targets histone methyltransferases KMT5B and KMT5C, leading to epigenetic transcriptional repression. Controls histone H4 'Lys-20' trimethylation. Probably acts as a transcription repressor by recruiting chromatin-modifying enzymes to promoters. Potent inhibitor of E2F-mediated trans-activation, associates preferentially with E2F5. Binds to cyclins A and E. Binds to and may be involved in the transforming capacity of the adenovirus E1A protein. May act as a tumor suppressor. This Rattus norvegicus (Rat) protein is Retinoblastoma-like protein 2 (Rbl2).